The chain runs to 389 residues: MEKAIRNFLSQESAGGILLLVAVALAMLMANSPLSGLYQGFLGTDVQVKIGELDIHKPLILWINDGLMAVFFLLIGLEVKRELLEGALSSVAQASLPTFAAIGGMLVPAGVYLLFNYGDPVTQAGWAIPAATDIAFALGIMALLGSRVPVSLKVFLLALAIIDDLGVIVIIALFYSTDLSTISLVIASLAIAGLVGLNRKGVTSLLPYSILGLILWVAVLKSGVHATLAGVIIAFCIPLRAKDGSSPSEGLEHSLHPWSTFFILPVFAFANAGVYVGNMNLETLISPVPVGIALGLMLGKPIGVMVFSYIAVKLKLAQLPDGVGWKQIAPVAAMCGIGFTMSMFIASLAFEHADPMYGDLARLGTLIGSIMAALVGYFWLSKVLPNKGV.

Helical transmembrane passes span 14–34 (AGGI…NSPL), 59–79 (LILW…GLEV), 95–115 (SLPT…YLLF), 124–144 (AGWA…MALL), 154–174 (VFLL…IALF), 177–197 (TDLS…LVGL), 213–233 (LILW…GVII), 257–277 (PWST…VYVG), 292–312 (IALG…YIAV), 328–348 (IAPV…IASL), and 363–383 (LGTL…LSKV).

It belongs to the NhaA Na(+)/H(+) (TC 2.A.33) antiporter family.

Its subcellular location is the cell inner membrane. It carries out the reaction Na(+)(in) + 2 H(+)(out) = Na(+)(out) + 2 H(+)(in). In terms of biological role, na(+)/H(+) antiporter that extrudes sodium in exchange for external protons. This is Na(+)/H(+) antiporter NhaA from Shewanella baltica (strain OS155 / ATCC BAA-1091).